A 160-amino-acid chain; its full sequence is Ribonuclease HI (160 aa).

An RNase H type-1 domain is found at 4 to 147; it reads TPNSVTLYTD…CDRLAVAAYQ (144 aa). Positions 13, 52, 74, and 139 each coordinate Mg(2+).

It belongs to the RNase H family. In terms of assembly, monomer. Requires Mg(2+) as cofactor.

It is found in the cytoplasm. The enzyme catalyses Endonucleolytic cleavage to 5'-phosphomonoester.. Functionally, endonuclease that specifically degrades the RNA of RNA-DNA hybrids. In Synechocystis sp. (strain ATCC 27184 / PCC 6803 / Kazusa), this protein is Ribonuclease HI (rnhA).